A 351-amino-acid polypeptide reads, in one-letter code: Fe(3+) ions import ATP-binding protein FbpC (351 aa).

In terms of domain architecture, ABC transporter spans 7–241; it reads LTVKNLNKFF…PNHLETAKFM (235 aa). 39–46 contributes to the ATP binding site; it reads GASGCGKT.

Belongs to the ABC transporter superfamily. Fe(3+) ion importer (TC 3.A.1.10) family. As to quaternary structure, the complex is composed of two ATP-binding proteins (FbpC), two transmembrane proteins (FbpB) and a solute-binding protein (FbpA).

The protein localises to the cell inner membrane. It catalyses the reaction Fe(3+)(out) + ATP + H2O = Fe(3+)(in) + ADP + phosphate + H(+). Part of the ABC transporter complex FbpABC involved in Fe(3+) ions import. Responsible for energy coupling to the transport system. This is Fe(3+) ions import ATP-binding protein FbpC from Haemophilus influenzae (strain 86-028NP).